The following is a 349-amino-acid chain: Interferon-stimulated 20 kDa exonuclease-like 2 (349 aa).

Disordered stretches follow at residues 1 to 100 (MSTL…AAVP) and 126 to 166 (ALPK…KYSG). The segment covering 14–23 (PPKKALEGNA) has biased composition (basic and acidic residues). The span at 24 to 47 (KHRKFVKKRRLLERKGFLNKKKQP) shows a compositional bias: basic residues. A compositionally biased stretch (basic and acidic residues) spans 54–66 (LHSEPSQKGETPR). The segment covering 70–87 (TWKATPLPKKKTTAASSS) has biased composition (low complexity). Basic residues predominate over residues 130–142 (IKSHPTRPQKKGS). The region spanning 175–331 (MVAIDCEMVG…EDAQATMELY (157 aa)) is the Exonuclease domain.

It is found in the nucleus. It localises to the nucleolus. Its function is as follows. 3'-&gt; 5'-exoribonuclease involved in ribosome biogenesis in the processing of the 12S pre-rRNA. Displays a strong specificity for a 3'-end containing a free hydroxyl group. This Bos taurus (Bovine) protein is Interferon-stimulated 20 kDa exonuclease-like 2 (ISG20L2).